Reading from the N-terminus, the 315-residue chain is Cobalamin biosynthesis protein CobD (315 aa).

5 helical membrane passes run 54–74, 78–98, 152–172, 203–223, and 295–315; these read GLLFVLTVGMTGVVSWFILFL, IAYWLYVAVFVYLGYTTLAMT, ADGVIAPLFYLFIGGPVLALM, IANFIPARLAWFFLVIASFIL, and LLYTASTIAFIIFASIYLLLF.

The protein belongs to the CobD/CbiB family.

The protein resides in the cell membrane. The protein operates within cofactor biosynthesis; adenosylcobalamin biosynthesis. Converts cobyric acid to cobinamide by the addition of aminopropanol on the F carboxylic group. This is Cobalamin biosynthesis protein CobD from Listeria monocytogenes serotype 4b (strain F2365).